Here is a 335-residue protein sequence, read N- to C-terminus: Endo-1,4-beta-xylanase S20 (335 aa).

A signal peptide spans 1-22 (MLRKLVTGALAAALLLSGQSNA). Positions 39–241 (NNKNETGNGN…GSGYVDFTYA (203 aa)) constitute a GH11 domain. N-linked (GlcNAc...) asparagine glycosylation is found at Asn-42 and Asn-78. The active-site Nucleophile is the Glu-134. Asn-202 is a glycosylation site (N-linked (GlcNAc...) asparagine). Glu-228 acts as the Proton donor in catalysis. N-linked (GlcNAc...) asparagine glycosylation occurs at Asn-251. The segment at 251–291 (NASAPSNNNNNNNNNNDNNGNWNNWNNNNNNNNNNNNNNNN) is disordered. The segment covering 257–291 (NNNNNNNNNNDNNGNWNNWNNNNNNNNNNNNNNNN) has biased composition (low complexity). The CBM1 domain occupies 300–335 (NCAAIWGQCGGSGYNGPKCCKQGSCKQINQWYSQCQ).

This sequence belongs to the glycosyl hydrolase 11 (cellulase G) family.

The protein localises to the secreted. The catalysed reaction is Endohydrolysis of (1-&gt;4)-beta-D-xylosidic linkages in xylans.. It participates in glycan degradation; xylan degradation. Functionally, endo-1,4-beta-xylanase involved in the hydrolysis of xylan, a major structural heterogeneous polysaccharide found in plant biomass representing the second most abundant polysaccharide in the biosphere, after cellulose. This chain is Endo-1,4-beta-xylanase S20 (xynS20), found in Neocallimastix patriciarum (Rumen fungus).